The chain runs to 319 residues: ADP-L-glycero-D-manno-heptose-6-epimerase (319 aa).

NADP(+)-binding positions include 10-11 (FI), 31-32 (DD), K38, K53, and 75-79 (EGACS). The active-site Proton acceptor is Y139. K143 is an NADP(+) binding site. N168 provides a ligand contact to substrate. NADP(+) is bound by residues V169 and K177. Catalysis depends on K177, which acts as the Proton acceptor. Residues S179, H186, 200–203 (FEGA), R213, and Y281 each bind substrate.

This sequence belongs to the NAD(P)-dependent epimerase/dehydratase family. HldD subfamily. In terms of assembly, homopentamer. NADP(+) serves as cofactor.

It catalyses the reaction ADP-D-glycero-beta-D-manno-heptose = ADP-L-glycero-beta-D-manno-heptose. Its pathway is nucleotide-sugar biosynthesis; ADP-L-glycero-beta-D-manno-heptose biosynthesis; ADP-L-glycero-beta-D-manno-heptose from D-glycero-beta-D-manno-heptose 7-phosphate: step 4/4. Functionally, catalyzes the interconversion between ADP-D-glycero-beta-D-manno-heptose and ADP-L-glycero-beta-D-manno-heptose via an epimerization at carbon 6 of the heptose. This Aromatoleum aromaticum (strain DSM 19018 / LMG 30748 / EbN1) (Azoarcus sp. (strain EbN1)) protein is ADP-L-glycero-D-manno-heptose-6-epimerase.